Consider the following 99-residue polypeptide: Large ribosomal subunit protein bL28 (99 aa).

A disordered region spans residues methionine 1–serine 25. The span at glycine 11–asparagine 22 shows a compositional bias: polar residues.

Belongs to the bacterial ribosomal protein bL28 family.

In Rhodospirillum centenum (strain ATCC 51521 / SW), this protein is Large ribosomal subunit protein bL28.